Here is a 291-residue protein sequence, read N- to C-terminus: tRNA (guanine-N(1)-)-methyltransferase (291 aa).

Residues Gly160 and 184–189 (IGDYVL) contribute to the S-adenosyl-L-methionine site.

This sequence belongs to the RNA methyltransferase TrmD family. Homodimer.

It localises to the cytoplasm. It carries out the reaction guanosine(37) in tRNA + S-adenosyl-L-methionine = N(1)-methylguanosine(37) in tRNA + S-adenosyl-L-homocysteine + H(+). In terms of biological role, specifically methylates guanosine-37 in various tRNAs. This chain is tRNA (guanine-N(1)-)-methyltransferase, found in Corynebacterium efficiens (strain DSM 44549 / YS-314 / AJ 12310 / JCM 11189 / NBRC 100395).